Here is a 197-residue protein sequence, read N- to C-terminus: Probable nicotinate-nucleotide adenylyltransferase (197 aa).

Belongs to the NadD family.

It catalyses the reaction nicotinate beta-D-ribonucleotide + ATP + H(+) = deamido-NAD(+) + diphosphate. Its pathway is cofactor biosynthesis; NAD(+) biosynthesis; deamido-NAD(+) from nicotinate D-ribonucleotide: step 1/1. Its function is as follows. Catalyzes the reversible adenylation of nicotinate mononucleotide (NaMN) to nicotinic acid adenine dinucleotide (NaAD). The sequence is that of Probable nicotinate-nucleotide adenylyltransferase from Leptospira borgpetersenii serovar Hardjo-bovis (strain JB197).